Consider the following 172-residue polypeptide: Large ribosomal subunit protein uL10 (172 aa).

It belongs to the universal ribosomal protein uL10 family. Part of the ribosomal stalk of the 50S ribosomal subunit. The N-terminus interacts with L11 and the large rRNA to form the base of the stalk. The C-terminus forms an elongated spine to which L12 dimers bind in a sequential fashion forming a multimeric L10(L12)X complex.

Functionally, forms part of the ribosomal stalk, playing a central role in the interaction of the ribosome with GTP-bound translation factors. The polypeptide is Large ribosomal subunit protein uL10 (Bartonella tribocorum (strain CIP 105476 / IBS 506)).